A 171-amino-acid polypeptide reads, in one-letter code: Co-chaperone protein HscB homolog (171 aa).

Positions Asn2–Gln74 constitute a J domain.

The protein belongs to the HscB family. Interacts with HscA and stimulates its ATPase activity.

Its function is as follows. Co-chaperone involved in the maturation of iron-sulfur cluster-containing proteins. Seems to help targeting proteins to be folded toward HscA. This chain is Co-chaperone protein HscB homolog, found in Vibrio vulnificus (strain CMCP6).